The primary structure comprises 287 residues: uncharacterized protein (287 aa).

The protein belongs to the AllH family.

This is an uncharacterized protein from Escherichia coli (strain K12).